Consider the following 1255-residue polypeptide: DNA-directed RNA polymerase subunit beta' (1255 aa).

Residues Cys-60, Cys-62, Cys-77, and Cys-80 each coordinate Zn(2+). The Mg(2+) site is built by Asp-503, Asp-505, and Asp-507. Cys-875, Cys-950, Cys-957, and Cys-960 together coordinate Zn(2+).

This sequence belongs to the RNA polymerase beta' chain family. As to quaternary structure, the RNAP catalytic core consists of 2 alpha, 1 beta, 1 beta' and 1 omega subunit. When a sigma factor is associated with the core the holoenzyme is formed, which can initiate transcription. Mg(2+) serves as cofactor. Zn(2+) is required as a cofactor.

It carries out the reaction RNA(n) + a ribonucleoside 5'-triphosphate = RNA(n+1) + diphosphate. In terms of biological role, DNA-dependent RNA polymerase catalyzes the transcription of DNA into RNA using the four ribonucleoside triphosphates as substrates. The sequence is that of DNA-directed RNA polymerase subunit beta' from Mycoplasma capricolum subsp. capricolum (strain California kid / ATCC 27343 / NCTC 10154).